A 415-amino-acid polypeptide reads, in one-letter code: Ammonium transporter Rh type A (415 aa).

Residues 1–2 (MR) are Cytoplasmic-facing. Residues 3-23 (FIFPTIAVLLEASMIVLFGFF) form a helical membrane-spanning segment. At 24-51 (VKYETEQNAIQQPNSTNSTKVDRSLELY) the chain is on the extracellular side. 2 N-linked (GlcNAc...) asparagine glycosylation sites follow: Asn-37 and Asn-40. A helical membrane pass occupies residues 52–72 (PLFQDVHVMIFVGFGFLMTFL). The Cytoplasmic portion of the chain corresponds to 73-76 (KKYG). Residues 77–97 (FSSVGINLLIAALGLQWGTFV) traverse the membrane as a helical segment. Residues 98 to 115 (QGMVHRHGQTIYIGIKNM) are Extracellular-facing. Residues 116–136 (INADFSTATVLISFGAVLGKI) form a helical membrane-spanning segment. Over 137-142 (SPTQML) the chain is Cytoplasmic. Residues 143–163 (IMTIIEITVFAGNEYVVGEIF) form a helical membrane-spanning segment. The Extracellular segment spans residues 164-167 (QASD). The helical transmembrane segment at 168 to 188 (IGASMTIHAFGAYFGLAVAGV) threads the bilayer. The Cytoplasmic portion of the chain corresponds to 189–208 (LYRTGLRKGHEKEESEYHSD). Residues 209–229 (LFAMIGTLFLWMFWPSFNSAI) form a helical membrane-spanning segment. At 230–236 (AETAEEQ) the chain is on the extracellular side. Residues 237 to 257 (YLAIINTYLSLVACVLTAYAM) form a helical membrane-spanning segment. Topologically, residues 258 to 268 (SSLVGHRGKLD) are cytoplasmic. A helical membrane pass occupies residues 269-287 (MVHIQNATLAGGVAVGTCA). The Extracellular portion of the chain corresponds to 288–290 (DMK). A helical transmembrane segment spans residues 291–311 (IHPYGSLIIGSIAGMVSVLGF). Topologically, residues 312–332 (RFLTPCLTAKLRIHDTCGVHN) are cytoplasmic. The chain crosses the membrane as a helical span at residues 333 to 353 (LHGLPGVVGGLSSIVAILLGV). Residues 354–363 (STASSMTMQA) are Extracellular-facing. The helical transmembrane segment at 364 to 384 (AALGSSIGSAIAGGLITGLIL) threads the bilayer. At 385–415 (RFIVRGQPSKDNFFDDSVYWEVPKEKELDNV) the chain is on the cytoplasmic side.

The protein belongs to the ammonium transporter (TC 2.A.49) family. Rh subfamily. As to quaternary structure, homodimer. Heterotrimer; a RHCE monomer interacts with a RHAG homodimer. Component of the ankyrin-1 complex in the erythrocyte, composed of ANK1, RHCE, RHAG, SLC4A1, EPB42, GYPA, GYPB and AQP1. Interacts with GYPB (via the N-terminal); this interaction bridges the (RHAG)2(RHCE) heterotrimer with the SLC4A1 Band 3 I dimer complexed with GYPA. Post-translationally, glycosylated.

Its subcellular location is the membrane. It carries out the reaction methylamine(out) = methylamine(in). The enzyme catalyses NH4(+)(in) = NH4(+)(out). It catalyses the reaction CO2(out) = CO2(in). Component of the ankyrin-1 complex, a multiprotein complex involved in the stability and shape of the erythrocyte membrane. Heterotrimer with RHCE (RHAG)2(RHCE), that transports ammonium and its related derivative methylammonium, in both neutral and ionic forms, across the erythrocyte membrane. The transport of NH4(+) is electrogenic and masks the NH3 transport. Also, may act as a CO2 channel. Moreover in erythrocyte, regulates RHD membrane expression and is associated with rhesus blood group antigen expression. The polypeptide is Ammonium transporter Rh type A (Canis lupus familiaris (Dog)).